A 762-amino-acid chain; its full sequence is Multifunctional tryptophan biosynthesis protein (762 aa).

In terms of domain architecture, Glutamine amidotransferase type-1 spans 25-224 (NLILIDNYDS…LHMQGGTWAE (200 aa)). Residue 76–78 (GPG) participates in L-glutamine binding. Cys-104 serves as the catalytic Nucleophile; for GATase activity. Residues Gln-108 and 154 to 155 (SL) contribute to the L-glutamine site. Residues His-198 and Glu-200 each act as for GATase activity in the active site. An indole-3-glycerol phosphate synthase region spans residues 251–515 (ILQKIYAHRK…DATQFIRELC (265 aa)). The N-(5'-phosphoribosyl)anthranilate isomerase stretch occupies residues 531-762 (LVKICGTRSA…EFVKAAKSVR (232 aa)).

In terms of assembly, tetramer of two components I and two components II.

It carries out the reaction chorismate + L-glutamine = anthranilate + pyruvate + L-glutamate + H(+). The catalysed reaction is N-(5-phospho-beta-D-ribosyl)anthranilate = 1-(2-carboxyphenylamino)-1-deoxy-D-ribulose 5-phosphate. The enzyme catalyses 1-(2-carboxyphenylamino)-1-deoxy-D-ribulose 5-phosphate + H(+) = (1S,2R)-1-C-(indol-3-yl)glycerol 3-phosphate + CO2 + H2O. The protein operates within amino-acid biosynthesis; L-tryptophan biosynthesis; L-tryptophan from chorismate: step 1/5. It functions in the pathway amino-acid biosynthesis; L-tryptophan biosynthesis; L-tryptophan from chorismate: step 3/5. Its pathway is amino-acid biosynthesis; L-tryptophan biosynthesis; L-tryptophan from chorismate: step 4/5. In terms of biological role, trifunctional enzyme bearing the Gln amidotransferase (GATase) domain of anthranilate synthase, indole-glycerolphosphate synthase, and phosphoribosylanthranilate isomerase activities. The protein is Multifunctional tryptophan biosynthesis protein (trp-1) of Neurospora crassa (strain ATCC 24698 / 74-OR23-1A / CBS 708.71 / DSM 1257 / FGSC 987).